Here is an 843-residue protein sequence, read N- to C-terminus: MAGEYSGSRSSNTQLLAELEALSENLYQKPQVSVGNRRTNSLALPRSSVPSLVTSADEVSTARAEDLTVSKPRARRLSLSPWRSRPKLEVEEEENVTQSNRIVKKPEESSSGSGVKEEKKGIWNWKPIRGLVRIGMQKLSCLLSVEVVAAQNLPASMNGLRLGVCVRKKETKDGAVQTMPCRVSQGSADFEETLFIKCHVYYSPANGKGSPAKFEARPFLFYLFAVDAKELEFGRHVVDLSELIQESVEKMNYEGARVRQWDMNWGLSGKAKGGELALKLGFQIMEKDGGAGIYSKQGEFGMKPSSKPKNFANSFGRKQSKTSFSVPSPKMTSRSEAWTPASGVESVSDFHGMEHLNLDEPEEKPEEKPVQKNDKPEQRAEDDQEEPDFEVVDKGVEFDDDLETEKSDGTIGERSVEMKEQHVNVDDPRHIMRLTELDSIAKQIKALESMMKDESDGGDGETESQRLDEEEQTVTKEFLQLLEDEETEKLKFYQHKMDISELRSGESVDDESENYLSDLGKGIGCVVQTRDGGYLVSMNPFDTVVMRKDTPKLVMQISKQIVVLPEAGPATGFELFHRMAGSGEELESKISSLMAIDELMGKTGEQVAFEGIASAIIQGRNKERANTSAARTVAAVKTMANAMSSGRRERIMTGIWNVEENPLTSAEEVLAVSLQKLEEMVVEGLKIQADMVDDEAPFEVSAAKGQKNPLESTIPLEEWQKEHRTQQKLTVLATVQLRDPTRRYEAVGGTVVVAVQAEEEEEKGLKVGSLHIGGVKKDAAEKRRLTAAQWLVEHGMGKKGKKKSNIKKKEKEEEEEEMLWSLSSRVMADMWLKSIRNPDVKLH.

The segment covering 30–58 has biased composition (polar residues); it reads PQVSVGNRRTNSLALPRSSVPSLVTSADE. 2 disordered regions span residues 30 to 65 and 88 to 116; these read PQVS…ARAE and LEVE…SGVK. Positions 131–284 constitute a C2 NT-type domain; that stretch reads LVRIGMQKLS…ELALKLGFQI (154 aa). Disordered stretches follow at residues 300 to 412 and 450 to 472; these read FGMK…GTIG and MMKD…EEEQ. Polar residues predominate over residues 307-336; the sequence is KPKNFANSFGRKQSKTSFSVPSPKMTSRSE. Residues S314 and S328 each carry the phosphoserine modification. Residues 365–381 are compositionally biased toward basic and acidic residues; it reads PEEKPVQKNDKPEQRAE. Residue T404 is modified to Phosphothreonine. At S407 the chain carries Phosphoserine. At T410 the chain carries Phosphothreonine. A compositionally biased stretch (acidic residues) spans 456 to 472; the sequence is DGGDGETESQRLDEEEQ. S507 is subject to Phosphoserine.

As to expression, expressed in leaves, stems, cauline leaves, and flowers but not in roots. Present in leaves in both mesophyll and pavement cells.

It localises to the cytoplasm. Functionally, necessary for chloroplast and nuclear photorelocation movements via the regulation of chloroplast-actin (cp-actin) filaments in mesophyll cells, and together with PMIR1, in pavement cells. Required component for both the low- and high-light-dependent chloroplast movement responses via an abscisic acid (ABA) pathway. Involved in the ABA response pathway during seed germination. Modulates ABA accumulation during periods of water deficit at the seedling stage. In Arabidopsis thaliana (Mouse-ear cress), this protein is Protein PLASTID MOVEMENT IMPAIRED 1.